The following is a 393-amino-acid chain: MAVAVVFGASGISGWGITKALLDAKTQNAFSKIIALTNRSLSLAESGLPDDDRLQLHSGIDLQANVDDVIAKLRERIPSIGNVTHVFYTAFSTSHTDNQLMMKASNTKMLRTMVEAMETVAPSLSFIAVQTGSNHYGILFAEVLGERFGPVPLKEDLPRLPSPLRDSLMFYAMADEMDELSRGKSWKWCDIRPDMIVGYLPRPNSHSIAESIGYYLAFHAYLTPGEEVPFPGSEAAWNAKFSLTGQGVLGNFNVHLACKNSIENGEAFNIANKPFTTWASLWPLLAGYWGLKGTAPVGHHGIPDAASWVLDNMDRVKGWEEKYSMKPGRLFKIPWRYFHWALNMPFDRYLDLTRCEQTGFQQHEEHKESFETAWKCMQEAKLLPIVDKSSTPP.

NADP(+) is bound at residue Leu54. Residue Ser233 is the Proton donor of the active site. Lys259 serves as the catalytic Lowers pKa of active site Tyr. NADP(+) is bound at residue Ala286.

This sequence belongs to the short-chain dehydrogenases/reductases (SDR) family. Highly divergent.

It functions in the pathway mycotoxin biosynthesis. Its function is as follows. Short chain dehydrogenase; part of the gene cluster that mediates the biosynthesis of sirodesmin PL, an epipolythiodioxopiperazine (ETP) characterized by a disulfide bridged cyclic dipeptide and that acts as a phytotoxin which is involved in the blackleg didease of canola. SirD catalyzes the O-prenylation of L-tyrosine (L-Tyr) in the presence of dimethylallyl diphosphate (DMAPP) to yield 4-O-dimethylallyl-L-Tyr, and therefore represents probably the first pathway-specific enzyme in the biosynthesis of sirodesmin PL. 4-O-dimethylallyl-L-Tyr, then undergoes condensation with L-Ser in a reaction catalyzed by the non-ribosomal peptide synthase sirP to form the diketopiperazine (DKP) backbone. Further bishydroxylation of the DKP performed by the cytochrome P450 monooxygenase sirC leads to the production of the intermediate phomamide. This step is essential to form the reactive thiol group required for toxicity of sirodesmin PL. The next steps of sirodesmin biosynthesis are not well understood yet, but some predictions could be made from intermediate compounds identification. Phomamide is converted into phomalizarine via oxidation, probably by sirT. Further oxidation, methylation (by sirM or sirN) and reduction steps convert phomalizarine to deacetyl sirodesmin. Finally, acetyltransferase sirH probably acetylates deacetyl sirodesmin to produce sirodesmin PL. This chain is Short chain dehydrogenase sirQ, found in Leptosphaeria maculans (Blackleg fungus).